Reading from the N-terminus, the 96-residue chain is Co-chaperonin GroES (96 aa).

The protein belongs to the GroES chaperonin family. As to quaternary structure, heptamer of 7 subunits arranged in a ring. Interacts with the chaperonin GroEL.

The protein localises to the cytoplasm. Together with the chaperonin GroEL, plays an essential role in assisting protein folding. The GroEL-GroES system forms a nano-cage that allows encapsulation of the non-native substrate proteins and provides a physical environment optimized to promote and accelerate protein folding. GroES binds to the apical surface of the GroEL ring, thereby capping the opening of the GroEL channel. The chain is Co-chaperonin GroES from Coxiella burnetii (strain Dugway 5J108-111).